Reading from the N-terminus, the 66-residue chain is Antimicrobial peptide Eval967 (66 aa).

An N-terminal signal peptide occupies residues 1–22 (MKFSALLPVFFLLLAVIDYCQA). Position 36 is a leucine amide (Leu36). Residues 37–66 (GKRDVKTQKYVDIKRRDLDLDDMLSKLFED) constitute a propeptide that is removed on maturation.

The protein belongs to the non-disulfide-bridged peptide (NDBP) superfamily. Short antimicrobial peptide (group 4) family. In terms of tissue distribution, expressed by the venom gland.

The protein localises to the secreted. Its function is as follows. Probable antimicrobial peptide. Has no inhibitory activity against herpes simplex virus type 1 (HSV-1). This chain is Antimicrobial peptide Eval967, found in Euscorpiops validus (Scorpion).